The sequence spans 869 residues: Ubiquitin carboxyl-terminal hydrolase 29 (869 aa).

Polar residues-rich tracts occupy residues 104–120 (SSTP…MSSQ) and 140–150 (SLNTTPESGTP). The segment at 104 to 226 (SSTPCESQQP…KAVTLREQEK (123 aa)) is disordered. Basic and acidic residues predominate over residues 187 to 200 (VNKDIPKENTPDQK). Positions 201–212 (KKSRRYYSRNRG) are enriched in basic residues. The span at 213 to 226 (GKAEKAVTLREQEK) shows a compositional bias: basic and acidic residues. The 538-residue stretch at 289 to 826 (EGFPNLGNTC…SGYIFFYMHN (538 aa)) folds into the USP domain. Cys298 (nucleophile) is an active-site residue. Residues 723-754 (SQEDPEKDLSRSPELQEDDPHSFAFGSDDSKD) form a disordered region. The active-site Proton acceptor is the His781.

This sequence belongs to the peptidase C19 family. Predominantly expressed in brain and testis. Highest expression levels in adult brain, especially in the cerebral cortex and hippocampus, and in the forebrain, face, and limb buds of midgestation mouse embryos.

It localises to the cytoplasm. It is found in the perinuclear region. The enzyme catalyses Thiol-dependent hydrolysis of ester, thioester, amide, peptide and isopeptide bonds formed by the C-terminal Gly of ubiquitin (a 76-residue protein attached to proteins as an intracellular targeting signal).. Deubiquitinase involved in innate antiviral immunity by mediating 'Lys-48'-linked deubiquitination of CGAS, thereby promoting its stabilization. This Mus musculus (Mouse) protein is Ubiquitin carboxyl-terminal hydrolase 29.